Reading from the N-terminus, the 347-residue chain is Protein-arginine kinase (347 aa).

In terms of domain architecture, Phosphagen kinase C-terminal spans 22-247 (LVVSTRIRLA…EQVIQAERHA (226 aa)). ATP-binding positions include 25 to 29 (STRIR), His-85, Arg-118, 169 to 173 (RASVM), and 200 to 205 (RGRYGE). The RDXXRA motif of the pArg binding pocket involved in allosteric regulation motif lies at 330–335 (RDRERA).

This sequence belongs to the ATP:guanido phosphotransferase family.

It carries out the reaction L-arginyl-[protein] + ATP = N(omega)-phospho-L-arginyl-[protein] + ADP + H(+). Appears to be allosterically activated by the binding of pArg-containing polypeptides to the pArg-binding pocket localized in the C-terminal domain of McsB. In terms of biological role, catalyzes the specific phosphorylation of arginine residues in proteins. This Exiguobacterium sp. (strain ATCC BAA-1283 / AT1b) protein is Protein-arginine kinase.